We begin with the raw amino-acid sequence, 277 residues long: tRNA pseudouridine synthase A (277 aa).

Asp-57 serves as the catalytic Nucleophile. Position 115 (Tyr-115) interacts with substrate.

The protein belongs to the tRNA pseudouridine synthase TruA family. In terms of assembly, homodimer.

The enzyme catalyses uridine(38/39/40) in tRNA = pseudouridine(38/39/40) in tRNA. Functionally, formation of pseudouridine at positions 38, 39 and 40 in the anticodon stem and loop of transfer RNAs. This Nitratidesulfovibrio vulgaris (strain DSM 19637 / Miyazaki F) (Desulfovibrio vulgaris) protein is tRNA pseudouridine synthase A.